Here is a 196-residue protein sequence, read N- to C-terminus: N-(5'-phosphoribosyl)anthranilate isomerase (196 aa).

It belongs to the TrpF family.

It catalyses the reaction N-(5-phospho-beta-D-ribosyl)anthranilate = 1-(2-carboxyphenylamino)-1-deoxy-D-ribulose 5-phosphate. The protein operates within amino-acid biosynthesis; L-tryptophan biosynthesis; L-tryptophan from chorismate: step 3/5. The protein is N-(5'-phosphoribosyl)anthranilate isomerase of Sulfurovum sp. (strain NBC37-1).